The primary structure comprises 543 residues: Zinc finger protein tra-4 (543 aa).

Residues 1–38 (MDDPNQCTIKQEDSITRPRPTEAPTIQNLKQEPAIEEG) form a disordered region. Residues 10 to 20 (KQEDSITRPRP) show a composition bias toward basic and acidic residues. 7 C2H2-type zinc fingers span residues 218-241 (VRCK…RDKH), 327-350 (PQCP…AKKH), 381-406 (YVCF…KKFH), 413-436 (FRCS…KMSH), 442-464 (FQCH…ERMH), 470-493 (FECK…RDEH), and 495-518 (YVCA…YEEH).

The protein belongs to the krueppel C2H2-type zinc-finger protein family. As to quaternary structure, interacts with histone deacetylase hda-1. May interact with nasp-1.

The protein localises to the nucleus. In terms of biological role, probable transcription factor. Promotes normal hermaphrodite (XX) development, in concert with histone deacetylase hda-1 and nasp-1, perhaps as components of a complex. May cooperate with transcription factor tra-1 to repress male-specific genes in hermaphrodites. Synthetic multivulva (synMuv) class B protein, required to repress the induction of vulval development by let-60 Ras signaling. The polypeptide is Zinc finger protein tra-4 (Caenorhabditis elegans).